A 668-amino-acid polypeptide reads, in one-letter code: ATP-dependent RNA helicase MSS116, mitochondrial (668 aa).

The transit peptide at 1–38 (MLKQLSRSLGIRSSPIVANLIRSKQVCTRGFHISLVKQ) directs the protein to the mitochondrion. The short motif at 87–115 (DFKGKGYIHDSIINSLHKNDFKELTPIQQ) is the Q motif element. Residues 119 to 300 (VPIFNTEKGL…KKHIHPEYEF (182 aa)) enclose the Helicase ATP-binding domain. 132–139 (AKTGTGKT) lines the ATP pocket. The short motif at 242-245 (DEAD) is the DEAD box element. Residues 332 to 501 (SLSELHGIMK…NIIDQIESPL (170 aa)) enclose the Helicase C-terminal domain. Positions 585–668 (YSDFSRSGMS…EHRRIRDHDE (84 aa)) are disordered. The segment covering 586-597 (SDFSRSGMSQRP) has biased composition (polar residues). Residues 609 to 636 (NGRGKYGNNRNNDWSYQNKNRYNNNNNR) show a composition bias toward low complexity. The span at 637-668 (QTERSYDSDRKSHNDWKYEKKFEHRRIRDHDE) shows a compositional bias: basic and acidic residues.

The protein belongs to the DEAD box helicase family. DDX18/HAS1 subfamily.

The protein resides in the mitochondrion matrix. It carries out the reaction ATP + H2O = ADP + phosphate + H(+). In terms of biological role, ATP-dependent RNA helicase required for mitochondrial splicing of group I and II introns. Also required for efficient mitochondrial translation. The protein is ATP-dependent RNA helicase MSS116, mitochondrial (MSS116) of Candida albicans (strain SC5314 / ATCC MYA-2876) (Yeast).